A 95-amino-acid polypeptide reads, in one-letter code: Aspartyl/glutamyl-tRNA(Asn/Gln) amidotransferase subunit C (95 aa).

This sequence belongs to the GatC family. In terms of assembly, heterotrimer of A, B and C subunits.

The catalysed reaction is L-glutamyl-tRNA(Gln) + L-glutamine + ATP + H2O = L-glutaminyl-tRNA(Gln) + L-glutamate + ADP + phosphate + H(+). It carries out the reaction L-aspartyl-tRNA(Asn) + L-glutamine + ATP + H2O = L-asparaginyl-tRNA(Asn) + L-glutamate + ADP + phosphate + 2 H(+). In terms of biological role, allows the formation of correctly charged Asn-tRNA(Asn) or Gln-tRNA(Gln) through the transamidation of misacylated Asp-tRNA(Asn) or Glu-tRNA(Gln) in organisms which lack either or both of asparaginyl-tRNA or glutaminyl-tRNA synthetases. The reaction takes place in the presence of glutamine and ATP through an activated phospho-Asp-tRNA(Asn) or phospho-Glu-tRNA(Gln). The protein is Aspartyl/glutamyl-tRNA(Asn/Gln) amidotransferase subunit C of Bradyrhizobium diazoefficiens (strain JCM 10833 / BCRC 13528 / IAM 13628 / NBRC 14792 / USDA 110).